The following is a 631-amino-acid chain: Putative ATP-dependent DNA helicase Q1 (631 aa).

The 176-residue stretch at 118–293 folds into the Helicase ATP-binding domain; the sequence is INAVMSKEDA…KDMLGIQAAL (176 aa). 131 to 138 serves as a coordination point for ATP; sequence LSTGGGKS. The DEVH box motif lies at 237–240; it reads DEVH. A Helicase C-terminal domain is found at 318 to 466; that stretch reads CTEEIAKTIK…NLYNMVRYAA (149 aa). Residues Cys-471, Cys-489, Cys-493, and Cys-496 each coordinate Zn(2+). Residues 610 to 631 form a disordered region; it reads ESKSRKRKASSSVEEEDVMVLD. A compositionally biased stretch (acidic residues) spans 622–631; the sequence is VEEEDVMVLD.

Belongs to the helicase family. RecQ subfamily. Zn(2+) is required as a cofactor.

It is found in the nucleus. The catalysed reaction is Couples ATP hydrolysis with the unwinding of duplex DNA by translocating in the 3'-5' direction.. It catalyses the reaction ATP + H2O = ADP + phosphate + H(+). Its function is as follows. DNA helicase that may play a role in the repair of DNA that is damaged by ultraviolet light or other mutagens. Exhibits a magnesium-dependent ATP-dependent DNA-helicase activity that unwinds single- and double-stranded DNA in a 3'-5' direction. The chain is Putative ATP-dependent DNA helicase Q1 from Caenorhabditis elegans.